The chain runs to 193 residues: Ribosome hibernation promotion factor (193 aa).

The protein belongs to the HPF/YfiA ribosome-associated protein family. Long HPF subfamily. As to quaternary structure, interacts with 100S ribosomes.

It is found in the cytoplasm. In terms of biological role, might modulate either transcription and/or translation. Required for dimerization of active 70S ribosomes into 100S ribosomes in stationary phase; 100S ribosomes are translationally inactive and sometimes present during exponential growth. This is Ribosome hibernation promotion factor from Picosynechococcus sp. (strain ATCC 27264 / PCC 7002 / PR-6) (Agmenellum quadruplicatum).